Consider the following 155-residue polypeptide: Transcriptional repressor NrdR (155 aa).

The segment covering 1–11 (MECPNCHQNAS) has biased composition (polar residues). A disordered region spans residues 1-22 (MECPNCHQNASRVIDSRPSDEN). The segment at 3–34 (CPNCHQNASRVIDSRPSDENRAIRRRRECENC) is a zinc-finger region. Positions 49 to 139 (LLVVKNDGTR…IYREFKDMSS (91 aa)) constitute an ATP-cone domain.

It belongs to the NrdR family. It depends on Zn(2+) as a cofactor.

Negatively regulates transcription of bacterial ribonucleotide reductase nrd genes and operons by binding to NrdR-boxes. This Lactobacillus acidophilus (strain ATCC 700396 / NCK56 / N2 / NCFM) protein is Transcriptional repressor NrdR.